A 435-amino-acid polypeptide reads, in one-letter code: GTPase Der (435 aa).

EngA-type G domains lie at 4–167 (PVVA…PAEK) and 175–350 (ISFS…DNQN). Residues 10-17 (GQPNVGKS), 57-61 (DTGGI), 119-122 (NKAD), 181-188 (GRPNVGKS), 228-232 (DTAGI), and 293-296 (NKWD) each bind GTP. Residues 351-435 (QRIQSSVLND…PIKILPRKRK (85 aa)) enclose the KH-like domain.

The protein belongs to the TRAFAC class TrmE-Era-EngA-EngB-Septin-like GTPase superfamily. EngA (Der) GTPase family. As to quaternary structure, associates with the 50S ribosomal subunit.

In terms of biological role, GTPase that plays an essential role in the late steps of ribosome biogenesis. In Lactobacillus helveticus (strain DPC 4571), this protein is GTPase Der.